Reading from the N-terminus, the 430-residue chain is 3-phosphoshikimate 1-carboxyvinyltransferase (430 aa).

Residues lysine 33, serine 34, and arginine 38 each contribute to the 3-phosphoshikimate site. Residue lysine 33 participates in phosphoenolpyruvate binding. Phosphoenolpyruvate is bound by residues glycine 101 and arginine 129. Positions 172, 173, 174, 201, 319, and 346 each coordinate 3-phosphoshikimate. Glutamine 174 serves as a coordination point for phosphoenolpyruvate. The Proton acceptor role is filled by glutamate 319. Phosphoenolpyruvate-binding residues include arginine 350, arginine 391, and lysine 416.

The protein belongs to the EPSP synthase family. As to quaternary structure, monomer.

It localises to the cytoplasm. It catalyses the reaction 3-phosphoshikimate + phosphoenolpyruvate = 5-O-(1-carboxyvinyl)-3-phosphoshikimate + phosphate. Its pathway is metabolic intermediate biosynthesis; chorismate biosynthesis; chorismate from D-erythrose 4-phosphate and phosphoenolpyruvate: step 6/7. Functionally, catalyzes the transfer of the enolpyruvyl moiety of phosphoenolpyruvate (PEP) to the 5-hydroxyl of shikimate-3-phosphate (S3P) to produce enolpyruvyl shikimate-3-phosphate and inorganic phosphate. The protein is 3-phosphoshikimate 1-carboxyvinyltransferase of Corynebacterium glutamicum (strain ATCC 13032 / DSM 20300 / JCM 1318 / BCRC 11384 / CCUG 27702 / LMG 3730 / NBRC 12168 / NCIMB 10025 / NRRL B-2784 / 534).